The primary structure comprises 491 residues: Acetyl-coenzyme A carboxylase carboxyl transferase subunit beta, chloroplastic (491 aa).

Positions 229 to 491 (LWVQCENCYG…FQLHGFFPLT (263 aa)) constitute a CoA carboxyltransferase N-terminal domain. The Zn(2+) site is built by cysteine 233, cysteine 236, cysteine 252, and cysteine 255. The C4-type zinc-finger motif lies at 233–255 (CENCYGLNYKQFFRSRLNICEHC).

This sequence belongs to the AccD/PCCB family. In terms of assembly, acetyl-CoA carboxylase is a heterohexamer composed of biotin carboxyl carrier protein, biotin carboxylase and 2 subunits each of ACCase subunit alpha and ACCase plastid-coded subunit beta (accD). Zn(2+) serves as cofactor.

It is found in the plastid. The protein resides in the chloroplast stroma. The enzyme catalyses N(6)-carboxybiotinyl-L-lysyl-[protein] + acetyl-CoA = N(6)-biotinyl-L-lysyl-[protein] + malonyl-CoA. It functions in the pathway lipid metabolism; malonyl-CoA biosynthesis; malonyl-CoA from acetyl-CoA: step 1/1. In terms of biological role, component of the acetyl coenzyme A carboxylase (ACC) complex. Biotin carboxylase (BC) catalyzes the carboxylation of biotin on its carrier protein (BCCP) and then the CO(2) group is transferred by the transcarboxylase to acetyl-CoA to form malonyl-CoA. The protein is Acetyl-coenzyme A carboxylase carboxyl transferase subunit beta, chloroplastic of Lemna minor (Common duckweed).